Here is a 184-residue protein sequence, read N- to C-terminus: Protein PLANT CADMIUM RESISTANCE 4 (184 aa).

Over residues 1–10 (MGRPGSQPNE) the composition is skewed to polar residues. The disordered stretch occupies residues 1 to 21 (MGRPGSQPNEAQPPPVQVQPT). Residues 96–116 (GGLLYGMIFFIGVPFVYSCMF) form a helical membrane-spanning segment.

Belongs to the cornifelin family.

It is found in the membrane. Its function is as follows. May be involved in heavy metals transport. The polypeptide is Protein PLANT CADMIUM RESISTANCE 4 (PCR4) (Arabidopsis thaliana (Mouse-ear cress)).